Here is a 95-residue protein sequence, read N- to C-terminus: Aspartyl/glutamyl-tRNA(Asn/Gln) amidotransferase subunit C (95 aa).

Belongs to the GatC family. As to quaternary structure, heterotrimer of A, B and C subunits.

The catalysed reaction is L-glutamyl-tRNA(Gln) + L-glutamine + ATP + H2O = L-glutaminyl-tRNA(Gln) + L-glutamate + ADP + phosphate + H(+). It carries out the reaction L-aspartyl-tRNA(Asn) + L-glutamine + ATP + H2O = L-asparaginyl-tRNA(Asn) + L-glutamate + ADP + phosphate + 2 H(+). Allows the formation of correctly charged Asn-tRNA(Asn) or Gln-tRNA(Gln) through the transamidation of misacylated Asp-tRNA(Asn) or Glu-tRNA(Gln) in organisms which lack either or both of asparaginyl-tRNA or glutaminyl-tRNA synthetases. The reaction takes place in the presence of glutamine and ATP through an activated phospho-Asp-tRNA(Asn) or phospho-Glu-tRNA(Gln). The polypeptide is Aspartyl/glutamyl-tRNA(Asn/Gln) amidotransferase subunit C (Chlorobium luteolum (strain DSM 273 / BCRC 81028 / 2530) (Pelodictyon luteolum)).